The sequence spans 196 residues: dITP/XTP pyrophosphatase (196 aa).

A substrate-binding site is contributed by 10 to 15 (SGNKGK). Glutamate 40 and aspartate 69 together coordinate Mg(2+). Aspartate 69 serves as the catalytic Proton acceptor. Substrate contacts are provided by residues serine 70, 147-150 (FGYD), lysine 170, and 175-176 (HR).

Belongs to the HAM1 NTPase family. In terms of assembly, homodimer. It depends on Mg(2+) as a cofactor.

It catalyses the reaction XTP + H2O = XMP + diphosphate + H(+). The enzyme catalyses dITP + H2O = dIMP + diphosphate + H(+). It carries out the reaction ITP + H2O = IMP + diphosphate + H(+). Functionally, pyrophosphatase that catalyzes the hydrolysis of nucleoside triphosphates to their monophosphate derivatives, with a high preference for the non-canonical purine nucleotides XTP (xanthosine triphosphate), dITP (deoxyinosine triphosphate) and ITP. Seems to function as a house-cleaning enzyme that removes non-canonical purine nucleotides from the nucleotide pool, thus preventing their incorporation into DNA/RNA and avoiding chromosomal lesions. The sequence is that of dITP/XTP pyrophosphatase from Prochlorococcus marinus (strain NATL1A).